The primary structure comprises 330 residues: tRNA(Ile)-lysidine synthase (330 aa).

An ATP-binding site is contributed by 31–36 (SGGQDS).

It belongs to the tRNA(Ile)-lysidine synthase family.

It is found in the cytoplasm. The catalysed reaction is cytidine(34) in tRNA(Ile2) + L-lysine + ATP = lysidine(34) in tRNA(Ile2) + AMP + diphosphate + H(+). In terms of biological role, ligates lysine onto the cytidine present at position 34 of the AUA codon-specific tRNA(Ile) that contains the anticodon CAU, in an ATP-dependent manner. Cytidine is converted to lysidine, thus changing the amino acid specificity of the tRNA from methionine to isoleucine. The sequence is that of tRNA(Ile)-lysidine synthase from Synechocystis sp. (strain ATCC 27184 / PCC 6803 / Kazusa).